The sequence spans 349 residues: tRNA N6-adenosine threonylcarbamoyltransferase (349 aa).

H117 and H121 together coordinate Fe cation. Substrate-binding positions include Q139–G143, D172, G185, D189, and N278. D310 contacts Fe cation.

It belongs to the KAE1 / TsaD family. Fe(2+) serves as cofactor.

It localises to the cytoplasm. The catalysed reaction is L-threonylcarbamoyladenylate + adenosine(37) in tRNA = N(6)-L-threonylcarbamoyladenosine(37) in tRNA + AMP + H(+). Functionally, required for the formation of a threonylcarbamoyl group on adenosine at position 37 (t(6)A37) in tRNAs that read codons beginning with adenine. Is involved in the transfer of the threonylcarbamoyl moiety of threonylcarbamoyl-AMP (TC-AMP) to the N6 group of A37, together with TsaE and TsaB. TsaD likely plays a direct catalytic role in this reaction. The protein is tRNA N6-adenosine threonylcarbamoyltransferase of Lactobacillus acidophilus (strain ATCC 700396 / NCK56 / N2 / NCFM).